Reading from the N-terminus, the 227-residue chain is PKHD-type hydroxylase GDI1238/Gdia_1949 (227 aa).

A Fe2OG dioxygenase domain is found at 78 to 178; the sequence is RVVPPLFNRY…RLASFFWTQS (101 aa). Positions 96, 98, and 159 each coordinate Fe cation. Arg169 is a 2-oxoglutarate binding site.

Fe(2+) serves as cofactor. Requires L-ascorbate as cofactor.

The polypeptide is PKHD-type hydroxylase GDI1238/Gdia_1949 (Gluconacetobacter diazotrophicus (strain ATCC 49037 / DSM 5601 / CCUG 37298 / CIP 103539 / LMG 7603 / PAl5)).